Consider the following 342-residue polypeptide: tRNA N6-adenosine threonylcarbamoyltransferase (342 aa).

2 residues coordinate Fe cation: His115 and His119. Residues 137–141 (IVSGG), Asp170, Gly183, Asp187, and Asn276 each bind substrate. Asp304 is a Fe cation binding site.

It belongs to the KAE1 / TsaD family. Fe(2+) serves as cofactor.

The protein resides in the cytoplasm. The enzyme catalyses L-threonylcarbamoyladenylate + adenosine(37) in tRNA = N(6)-L-threonylcarbamoyladenosine(37) in tRNA + AMP + H(+). Required for the formation of a threonylcarbamoyl group on adenosine at position 37 (t(6)A37) in tRNAs that read codons beginning with adenine. Is involved in the transfer of the threonylcarbamoyl moiety of threonylcarbamoyl-AMP (TC-AMP) to the N6 group of A37, together with TsaE and TsaB. TsaD likely plays a direct catalytic role in this reaction. This Staphylococcus saprophyticus subsp. saprophyticus (strain ATCC 15305 / DSM 20229 / NCIMB 8711 / NCTC 7292 / S-41) protein is tRNA N6-adenosine threonylcarbamoyltransferase.